Here is a 776-residue protein sequence, read N- to C-terminus: Ribosomal RNA large subunit methyltransferase K/L (776 aa).

One can recognise a THUMP domain in the interval 68–183 (DLYKICLWSR…DKQAELYLDL (116 aa)).

It belongs to the methyltransferase superfamily. RlmKL family.

Its subcellular location is the cytoplasm. The catalysed reaction is guanosine(2445) in 23S rRNA + S-adenosyl-L-methionine = N(2)-methylguanosine(2445) in 23S rRNA + S-adenosyl-L-homocysteine + H(+). The enzyme catalyses guanosine(2069) in 23S rRNA + S-adenosyl-L-methionine = N(2)-methylguanosine(2069) in 23S rRNA + S-adenosyl-L-homocysteine + H(+). Specifically methylates the guanine in position 2445 (m2G2445) and the guanine in position 2069 (m7G2069) of 23S rRNA. The protein is Ribosomal RNA large subunit methyltransferase K/L of Psychrobacter cryohalolentis (strain ATCC BAA-1226 / DSM 17306 / VKM B-2378 / K5).